Here is a 329-residue protein sequence, read N- to C-terminus: Protein Brevis radix-like 4 (329 aa).

Residues 12–37 (SGTSRHHGQQRRGGSPPPRGRTTSVY) are disordered. Positions 86–142 (REWVAQVEPGVQITFVSLAGGGGNDLKRIRFSREMYDKWQAQKWWGENNERIMELYN) constitute a BRX 1 domain. The interval 151 to 263 (LPTPPRSDDG…TTSCSSRDEV (113 aa)) is disordered. Low complexity-rich tracts occupy residues 222–236 (SNPSERAWQQQQQPQ) and 243–252 (AAASDAMDAA). Positions 253-263 (RTTSCSSRDEV) are enriched in polar residues. The 56-residue stretch at 274 to 329 (TEWVIQDEPGVYITVRELADGTRELRRVRFSRERFAELNAKLWWEENKERIQAQYL) folds into the BRX 2 domain.

Belongs to the BRX family.

The protein localises to the nucleus. In Oryza sativa subsp. japonica (Rice), this protein is Protein Brevis radix-like 4 (BRXL4).